Consider the following 686-residue polypeptide: Potassium-transporting ATPase ATP-binding subunit 2 (686 aa).

The next 4 membrane-spanning stretches (helical) occupy residues 37-57 (MFVV…PNLF), 64-84 (MILY…FANF), 223-243 (LLVS…PMAI), and 255-275 (VALT…AIGI). Asp-306 serves as the catalytic 4-aspartylphosphate intermediate. ATP is bound by residues Asp-343, Glu-347, 376–383 (FTAQTRMS), and Lys-395. Residues Asp-518 and Asp-522 each coordinate Mg(2+). Helical transmembrane passes span 588-608 (FAII…LNIM), 616-636 (AILS…PLAM), and 656-676 (VYGV…DLVI).

This sequence belongs to the cation transport ATPase (P-type) (TC 3.A.3) family. Type IA subfamily. As to quaternary structure, the system is composed of three essential subunits: KdpA, KdpB and KdpC.

It localises to the cell membrane. The catalysed reaction is K(+)(out) + ATP + H2O = K(+)(in) + ADP + phosphate + H(+). Its function is as follows. Part of the high-affinity ATP-driven potassium transport (or Kdp) system, which catalyzes the hydrolysis of ATP coupled with the electrogenic transport of potassium into the cytoplasm. This subunit is responsible for energy coupling to the transport system and for the release of the potassium ions to the cytoplasm. This Listeria innocua serovar 6a (strain ATCC BAA-680 / CLIP 11262) protein is Potassium-transporting ATPase ATP-binding subunit 2.